Here is a 948-residue protein sequence, read N- to C-terminus: Insulin receptor substrate 1 (948 aa).

The 102-residue stretch at 8-109 folds into the PH domain; sequence GMALSGYLKK…WLDKLLVLQR (102 aa). An IRS-type PTB domain is found at 122–236; that stretch reads YDQVWQVVIQ…SAMSAKTESN (115 aa). Positions 247–270 are disordered; sequence PDLSHEPMRKRSSSANEASKPINV. Phosphoserine occurs at positions 286 and 287. Polar residues predominate over residues 304-329; it reads RNGTLSESSNQTYFGSNHGLRSNTIS. Residues 304-373 form a disordered region; that stretch reads RNGTLSESSN…SDDNGSFSHY (70 aa). Position 342 is a phosphoserine (Ser342). Residue Tyr410 is modified to Phosphotyrosine; by INSR. The YXXM motif 1 signature appears at 410–413; that stretch reads YIPM. The tract at residues 528–559 is disordered; it reads ANRSQSSITKEGTSYSTSSNRQKKSTSAPLLS. Over residues 529–556 the composition is skewed to polar residues; that stretch reads NRSQSSITKEGTSYSTSSNRQKKSTSAP. Phosphoserine is present on Ser554. Positions 640-643 match the YXXM motif 2 motif; that stretch reads YLEM. The disordered stretch occupies residues 703–734; the sequence is EKKSNSPLNETPCSLKPTDVESNSHDEHSTNN. Basic and acidic residues predominate over residues 720–731; sequence TDVESNSHDEHS. Position 891 is a phosphotyrosine; by INSR (Tyr891). Residues 907-948 are disordered; sequence YLKRGSRESPPVSACPGDGNTYAKIDFDQSDSSSSSSNIFNT. Ser912 and Ser915 each carry phosphoserine. A Phosphotyrosine; by INSR modification is found at Tyr928. Low complexity predominate over residues 936 to 948; the sequence is SDSSSSSSNIFNT.

In terms of assembly, bindings to phosphatidylinositol 3-kinase and SHP2.

In terms of biological role, activates phosphatidylinositol 3-kinase when bound to the regulatory p85 subunit. May mediate the control of various cellular processes by insulin-like peptides. When phosphorylated by the insulin receptor binds specifically to various cellular proteins containing SH2 domains. Involved in control of cell proliferation, cell size, and body and organ growth throughout development. Also has a role in a signaling pathway controlling the physiological response required to endure periods of low nutrient conditions. Insulin/insulin-like growth factor (IGF) signaling pathway has a role in regulating aging and is necessary in the ovary for vitellogenic maturation. The chain is Insulin receptor substrate 1 from Drosophila erecta (Fruit fly).